Here is a 375-residue protein sequence, read N- to C-terminus: MLRTSTLFTRRVQPSLFSRNILRLQSTAAIPKTQKGVIFYENKGKLHYKDIPVPEPKPNEILINVKYSGVCHTDLHAWHGDWPLPVKLPLVGGHEGAGVVVKLGSNVKGWKVGDLAGIKWLNGSCMTCEFCESGHESNCPDADLSGYTHDGSFQQFATADAIQAAKIQQGTDLAEVAPILCAGVTVYKALKEADLKAGDWVAISGAAGGLGSLAVQYATAMGYRVLGIDAGEEKEKLFKKLGGEVFIDFTKTKNMVSDIQEATKGGPHGVINVSVSEAAISLSTEYVRPCGTVVLVGLPANAYVKSEVFSHVVKSINIKGSYVGNRADTREALDFFSRGLIKSPIKIVGLSELPKVYDLMEKGKILGRYVVDTSK.

A mitochondrion-targeting transit peptide spans 1-24 (MLRTSTLFTRRVQPSLFSRNILRL). Zn(2+) is bound at residue Cys-71. The NAD(+) site is built by His-72, Thr-73, and His-76. 7 residues coordinate Zn(2+): His-94, Glu-95, Cys-125, Cys-128, Cys-131, Cys-139, and Cys-181. NAD(+) contacts are provided by Gly-208, Gly-209, Leu-210, Asp-229, Lys-234, Phe-249, Val-296, Ser-321, Val-323, and Arg-368.

The protein belongs to the zinc-containing alcohol dehydrogenase family. As to quaternary structure, homotetramer. Requires Zn(2+) as cofactor.

It is found in the mitochondrion matrix. The protein resides in the mitochondrion inner membrane. It carries out the reaction a primary alcohol + NAD(+) = an aldehyde + NADH + H(+). The catalysed reaction is a secondary alcohol + NAD(+) = a ketone + NADH + H(+). It catalyses the reaction ethanol + NAD(+) = acetaldehyde + NADH + H(+). The enzyme catalyses butan-1-ol + NAD(+) = butanal + NADH + H(+). It carries out the reaction hexan-1-ol + NAD(+) = hexanal + NADH + H(+). Mitochondrial isozyme that reduces acetaldehyde to ethanol during the fermentation of glucose. Involved in the shuttling of mitochondrial reducing equivalents to the cytosol, where the redox balance is restored by NADH dehydrogenases on the external side of the mitochondrial inner membrane. Shows a high affinity for alcohols with a double bond conjugated to the alcohol group. The chain is Alcohol dehydrogenase 3, mitochondrial (ADH3) from Saccharomyces cerevisiae (strain ATCC 204508 / S288c) (Baker's yeast).